The chain runs to 278 residues: 4-diphosphocytidyl-2-C-methyl-D-erythritol kinase (278 aa).

The active site involves Lys10. Residue 93–103 coordinates ATP; the sequence is PMGGGLGGGSS. The active site involves Asp135.

Belongs to the GHMP kinase family. IspE subfamily.

It catalyses the reaction 4-CDP-2-C-methyl-D-erythritol + ATP = 4-CDP-2-C-methyl-D-erythritol 2-phosphate + ADP + H(+). The protein operates within isoprenoid biosynthesis; isopentenyl diphosphate biosynthesis via DXP pathway; isopentenyl diphosphate from 1-deoxy-D-xylulose 5-phosphate: step 3/6. In terms of biological role, catalyzes the phosphorylation of the position 2 hydroxy group of 4-diphosphocytidyl-2C-methyl-D-erythritol. This is 4-diphosphocytidyl-2-C-methyl-D-erythritol kinase from Thiobacillus denitrificans (strain ATCC 25259 / T1).